Reading from the N-terminus, the 447-residue chain is Glucose-6-phosphate isomerase (447 aa).

The Proton donor role is filled by Glu-288. Active-site residues include His-309 and Lys-423.

It belongs to the GPI family.

Its subcellular location is the cytoplasm. It catalyses the reaction alpha-D-glucose 6-phosphate = beta-D-fructose 6-phosphate. Its pathway is carbohydrate biosynthesis; gluconeogenesis. The protein operates within carbohydrate degradation; glycolysis; D-glyceraldehyde 3-phosphate and glycerone phosphate from D-glucose: step 2/4. Its function is as follows. Catalyzes the reversible isomerization of glucose-6-phosphate to fructose-6-phosphate. The protein is Glucose-6-phosphate isomerase of Lactobacillus johnsonii (strain CNCM I-12250 / La1 / NCC 533).